The chain runs to 331 residues: Glycerol-3-phosphate dehydrogenase [NAD(P)+] (331 aa).

3 residues coordinate NADPH: Trp13, Arg33, and Lys103. Sn-glycerol 3-phosphate-binding residues include Lys103, Gly131, and Thr133. Ala135 is a binding site for NADPH. Lys187, Asp240, Ser250, Arg251, and Asn252 together coordinate sn-glycerol 3-phosphate. Lys187 functions as the Proton acceptor in the catalytic mechanism. Residue Arg251 participates in NADPH binding. Positions 275 and 277 each coordinate NADPH.

This sequence belongs to the NAD-dependent glycerol-3-phosphate dehydrogenase family.

The protein resides in the cytoplasm. The catalysed reaction is sn-glycerol 3-phosphate + NAD(+) = dihydroxyacetone phosphate + NADH + H(+). The enzyme catalyses sn-glycerol 3-phosphate + NADP(+) = dihydroxyacetone phosphate + NADPH + H(+). It functions in the pathway membrane lipid metabolism; glycerophospholipid metabolism. In terms of biological role, catalyzes the reduction of the glycolytic intermediate dihydroxyacetone phosphate (DHAP) to sn-glycerol 3-phosphate (G3P), the key precursor for phospholipid synthesis. The protein is Glycerol-3-phosphate dehydrogenase [NAD(P)+] of Novosphingobium aromaticivorans (strain ATCC 700278 / DSM 12444 / CCUG 56034 / CIP 105152 / NBRC 16084 / F199).